Here is a 731-residue protein sequence, read N- to C-terminus: Nucleolar GTP-binding protein 2 (731 aa).

M1 carries the post-translational modification N-acetylmethionine. Residues 1–33 are disordered; that stretch reads MVKPKYKGRSTINPSKASTNPDRVQGAGGQNMR. A compositionally biased stretch (polar residues) spans 10-22; that stretch reads STINPSKASTNPD. Residues 207-368 enclose the CP-type G domain; it reads WGELYKVIDS…LIDCPGVVYP (162 aa). GTP is bound by residues 317-324 and 361-365; these read GYPNVGKS and DCPGV. The segment at 481–502 is disordered; sequence VVPEAAQNNPGEEVTETAGEGS. S504 is subject to Phosphoserine. A compositionally biased stretch (acidic residues) spans 555-589; it reads LEEELESFSDEEEEEQEQQRDDAEESSSEPEEENV. Disordered regions lie at residues 555–594 and 630–731; these read LEEE…NDTK and EKIF…RQKQ. Basic and acidic residues-rich tracts occupy residues 630–652 and 662–671; these read EKIF…DRAP and QREEEQEHSN. Basic residues-rich tracts occupy residues 681–695 and 721–731; these read ERRR…KKVG and KHKRKKFRQKQ.

This sequence belongs to the TRAFAC class YlqF/YawG GTPase family. NOG2 subfamily. As to quaternary structure, interacts with LYAR and RPL23A. Interacts with the nuclear importin-beta receptor and, at a lower extent, with importin-alpha. In terms of tissue distribution, widely expressed, with the highest expression level in testis.

It is found in the nucleus. Its subcellular location is the nucleolus. Functionally, GTPase that associates with pre-60S ribosomal subunits in the nucleolus and is required for their nuclear export and maturation. May promote cell proliferation possibly by increasing p53/TP53 protein levels, and consequently those of its downstream product CDKN1A/p21, and decreasing RPL23A protein levels. The chain is Nucleolar GTP-binding protein 2 (GNL2) from Homo sapiens (Human).